The chain runs to 333 residues: Eukaryotic translation initiation factor 2 subunit 2 (333 aa).

2 disordered regions span residues 1–119 and 139–164; these read MSGD…DLDI and ILEK…NQTG. Serine 2 is modified (N-acetylserine). Phosphoserine is present on residues serine 2 and serine 13. The span at 13 to 22 shows a compositional bias: basic residues; that stretch reads SKKKKKKKKP. Residues threonine 31 and threonine 36 each carry the phosphothreonine modification. Residues 40–51 are compositionally biased toward basic and acidic residues; the sequence is ETKEVEPEPTED. Serine 67 is subject to Phosphoserine. Positions 96–105 are enriched in basic and acidic residues; sequence EGVKDLKIES. Lysine 102 is covalently cross-linked (Glycyl lysine isopeptide (Lys-Gly) (interchain with G-Cter in SUMO2)). Residue serine 105 is modified to Phosphoserine. 2 stretches are compositionally biased toward acidic residues: residues 106–118 and 139–149; these read DVQE…DDLD and ILEKDEALEDE. Threonine 111 is modified (phosphothreonine). Residues serine 158 and serine 218 each carry the phosphoserine modification. N6-acetyllysine is present on residues lysine 265 and lysine 293. A C4-type zinc finger spans residues 281 to 305; it reads CHTCRSPDTILQKDTRLYFLQCETC.

The protein belongs to the eIF-2-beta/eIF-5 family. In terms of assembly, eukaryotic translation initiation factor 2 eIF2 is a heterotrimeric complex composed of an alpha (EIF2S1), a beta (EIF2S2) and a gamma (EIF2S3) chain. eIF2 is member of the 43S pre-initiation complex (43S PIC). eIF2 forms a complex with at least CELF1/CUGBP1, CALR, CALR3, EIF2S1, EIF2S2, HSP90B1 and HSPA5. Interacts with BZW2/5MP1. Interacts with EIF5.

The protein localises to the cytoplasm. The protein resides in the cytosol. Its function is as follows. Component of the eIF2 complex that functions in the early steps of protein synthesis by forming a ternary complex with GTP and initiator tRNA. This complex binds to a 40S ribosomal subunit, followed by mRNA binding to form the 43S pre-initiation complex (43S PIC). Junction of the 60S ribosomal subunit to form the 80S initiation complex is preceded by hydrolysis of the GTP bound to eIF2 and release of an eIF2-GDP binary complex. In order for eIF2 to recycle and catalyze another round of initiation, the GDP bound to eIF2 must exchange with GTP by way of a reaction catalyzed by eIF2B. This chain is Eukaryotic translation initiation factor 2 subunit 2 (EIF2S2), found in Pongo abelii (Sumatran orangutan).